Consider the following 121-residue polypeptide: NADH-quinone oxidoreductase subunit A 1 (121 aa).

The next 3 helical transmembrane spans lie at Ile11–Ala31, Leu65–Val85, and Met90–Ile110.

The protein belongs to the complex I subunit 3 family. NDH-1 is composed of 14 different subunits. Subunits NuoA, H, J, K, L, M, N constitute the membrane sector of the complex.

It is found in the cell inner membrane. The enzyme catalyses a quinone + NADH + 5 H(+)(in) = a quinol + NAD(+) + 4 H(+)(out). In terms of biological role, NDH-1 shuttles electrons from NADH, via FMN and iron-sulfur (Fe-S) centers, to quinones in the respiratory chain. The immediate electron acceptor for the enzyme in this species is believed to be ubiquinone. Couples the redox reaction to proton translocation (for every two electrons transferred, four hydrogen ions are translocated across the cytoplasmic membrane), and thus conserves the redox energy in a proton gradient. The protein is NADH-quinone oxidoreductase subunit A 1 of Rhizobium meliloti (strain 1021) (Ensifer meliloti).